Reading from the N-terminus, the 368-residue chain is Probable dual-specificity RNA methyltransferase RlmN (368 aa).

Glutamate 100 serves as the catalytic Proton acceptor. The 239-residue stretch at 106–344 folds into the Radical SAM core domain; sequence QHYGLSVCVT…CVVRQEHGTD (239 aa). An intrachain disulfide couples cysteine 113 to cysteine 349. 3 residues coordinate [4Fe-4S] cluster: cysteine 120, cysteine 124, and cysteine 127. S-adenosyl-L-methionine contacts are provided by residues 172–173, serine 204, 227–229, and asparagine 305; these read GE and SLH. The S-methylcysteine intermediate role is filled by cysteine 349.

The protein belongs to the radical SAM superfamily. RlmN family. Requires [4Fe-4S] cluster as cofactor.

Its subcellular location is the cytoplasm. The catalysed reaction is adenosine(2503) in 23S rRNA + 2 reduced [2Fe-2S]-[ferredoxin] + 2 S-adenosyl-L-methionine = 2-methyladenosine(2503) in 23S rRNA + 5'-deoxyadenosine + L-methionine + 2 oxidized [2Fe-2S]-[ferredoxin] + S-adenosyl-L-homocysteine. It catalyses the reaction adenosine(37) in tRNA + 2 reduced [2Fe-2S]-[ferredoxin] + 2 S-adenosyl-L-methionine = 2-methyladenosine(37) in tRNA + 5'-deoxyadenosine + L-methionine + 2 oxidized [2Fe-2S]-[ferredoxin] + S-adenosyl-L-homocysteine. Specifically methylates position 2 of adenine 2503 in 23S rRNA and position 2 of adenine 37 in tRNAs. The sequence is that of Probable dual-specificity RNA methyltransferase RlmN from Streptococcus agalactiae serotype V (strain ATCC BAA-611 / 2603 V/R).